Here is a 1448-residue protein sequence, read N- to C-terminus: Probable serine/threonine-protein kinase irlB (1448 aa).

The span at 412 to 423 (DDDDYDDYDDDD) shows a compositional bias: acidic residues. Positions 412 to 446 (DDDDYDDYDDDDDHHSGCNNNNNNNNDGDHNEDEN) are disordered. A compositionally biased stretch (low complexity) spans 428–437 (GCNNNNNNNN). 3 coiled-coil regions span residues 666–817 (AESE…EIQN), 887–921 (EIQL…SNMK), and 974–1016 (ENNK…QDED). Positions 975–1008 (NNKKQNLINDNNNNNNNNNNNNNNNNNNNNNNKL) are disordered. Residues 978 to 1008 (KQNLINDNNNNNNNNNNNNNNNNNNNNNNKL) show a composition bias toward low complexity. The Protein kinase domain maps to 1027–1293 (RNESNILGRG…IQNVLNHPLF (267 aa)). ATP contacts are provided by residues 1033 to 1041 (LGRGSNGTL) and K1056. The active-site Proton acceptor is the D1151. The KEN domain occupies 1296–1448 (LEKKIQFIDA…TIDYLFNFYN (153 aa)).

It belongs to the protein kinase superfamily. Ser/Thr protein kinase family.

It carries out the reaction L-seryl-[protein] + ATP = O-phospho-L-seryl-[protein] + ADP + H(+). It catalyses the reaction L-threonyl-[protein] + ATP = O-phospho-L-threonyl-[protein] + ADP + H(+). The polypeptide is Probable serine/threonine-protein kinase irlB (irlB-1) (Dictyostelium discoideum (Social amoeba)).